The chain runs to 310 residues: Forkhead box protein pes-1 (310 aa).

The segment covering 1-16 has biased composition (polar residues); that stretch reads MLPLSISTSPDPASQF. 4 disordered regions span residues 1–37, 58–77, 92–126, and 217–242; these read MLPL…GTAK, VSPS…SPAP, KQSS…SNPN, and SLRR…PNPI. Residues 17 to 35 are compositionally biased toward low complexity; that stretch reads PTVPDLPTLTPTPSPTSGT. The fork-head DNA-binding region spans 128–220; that stretch reads RPAYSYNALI…IGKDCGSLRR (93 aa). A compositionally biased stretch (basic residues) spans 218 to 231; sequence LRRKKNGKPRKYSK.

It localises to the nucleus. The protein resides in the cytoplasm. Functionally, transcription factor. Plays a role in embryogenesis and later development, perhaps acting redundantly with forkhead protein fkh-2. The polypeptide is Forkhead box protein pes-1 (Caenorhabditis briggsae).